Consider the following 595-residue polypeptide: Protein LUTEIN DEFICIENT 5, chloroplastic (595 aa).

The transit peptide at 1-28 directs the protein to the chloroplast; sequence MAMAFPLSYTPTITVKPVTYSRRSNFVV. Position 516 (Cys516) interacts with heme.

The protein belongs to the cytochrome P450 family. It depends on heme as a cofactor.

Its subcellular location is the plastid. The protein localises to the chloroplast. Functionally, heme-containing cytochrome P450 involved in the biosynthesis of xanthophylls. Specific for beta-ring hydroxylation of alpha- and beta-carotene. Also has a low activity toward the epsilon-rings of alpha-carotene. The beta-ring of alpha-carotene is the preferred substrate in planta. This is Protein LUTEIN DEFICIENT 5, chloroplastic (CYP97A3) from Arabidopsis thaliana (Mouse-ear cress).